Reading from the N-terminus, the 237-residue chain is Ribonuclease PH (237 aa).

Phosphate is bound by residues arginine 86 and 124 to 126 (GTR).

This sequence belongs to the RNase PH family. As to quaternary structure, homohexameric ring arranged as a trimer of dimers.

It catalyses the reaction tRNA(n+1) + phosphate = tRNA(n) + a ribonucleoside 5'-diphosphate. Functionally, phosphorolytic 3'-5' exoribonuclease that plays an important role in tRNA 3'-end maturation. Removes nucleotide residues following the 3'-CCA terminus of tRNAs; can also add nucleotides to the ends of RNA molecules by using nucleoside diphosphates as substrates, but this may not be physiologically important. Probably plays a role in initiation of 16S rRNA degradation (leading to ribosome degradation) during starvation. The chain is Ribonuclease PH from Shewanella sp. (strain W3-18-1).